The following is a 149-amino-acid chain: D-aminoacyl-tRNA deacylase (149 aa).

Positions 137 to 138 (GP) match the Gly-cisPro motif, important for rejection of L-amino acids motif.

The protein belongs to the DTD family. In terms of assembly, homodimer.

The protein resides in the cytoplasm. It catalyses the reaction glycyl-tRNA(Ala) + H2O = tRNA(Ala) + glycine + H(+). The enzyme catalyses a D-aminoacyl-tRNA + H2O = a tRNA + a D-alpha-amino acid + H(+). In terms of biological role, an aminoacyl-tRNA editing enzyme that deacylates mischarged D-aminoacyl-tRNAs. Also deacylates mischarged glycyl-tRNA(Ala), protecting cells against glycine mischarging by AlaRS. Acts via tRNA-based rather than protein-based catalysis; rejects L-amino acids rather than detecting D-amino acids in the active site. By recycling D-aminoacyl-tRNA to D-amino acids and free tRNA molecules, this enzyme counteracts the toxicity associated with the formation of D-aminoacyl-tRNA entities in vivo and helps enforce protein L-homochirality. This is D-aminoacyl-tRNA deacylase from Paracoccus denitrificans (strain Pd 1222).